Consider the following 92-residue polypeptide: Signal peptidase complex subunit 1 (92 aa).

Residues 1 to 12 are Cytoplasmic-facing; that stretch reads MDWQGQKLVEQL. A helical transmembrane segment spans residues 13 to 30; that stretch reads MQILLVISGVVAVVVGYT. The Lumenal segment spans residues 31–36; the sequence is TESFRT. The chain crosses the membrane as a helical span at residues 37-59; it reads MMLIYAGGVVLTTLVTVPNWPFY. Topologically, residues 60–92 are cytoplasmic; that stretch reads NLHPLKWLDPSEAEKHPKPEVVSVASKKKFSKK. A disordered region spans residues 73–92; that stretch reads EKHPKPEVVSVASKKKFSKK.

The protein belongs to the SPCS1 family. Component of the signal peptidase complex (SPC) composed of a catalytic subunit SEC11 and three accessory subunits SPCS1, SPCS2 and SPCS3. The complex induces a local thinning of the ER membrane which is used to measure the length of the signal peptide (SP) h-region of protein substrates. This ensures the selectivity of the complex towards h-regions shorter than 18-20 amino acids.

The protein localises to the endoplasmic reticulum membrane. In terms of biological role, component of the signal peptidase complex (SPC) which catalyzes the cleavage of N-terminal signal sequences from nascent proteins as they are translocated into the lumen of the endoplasmic reticulum. Dispensable for SPC enzymatic activity. In Arabidopsis thaliana (Mouse-ear cress), this protein is Signal peptidase complex subunit 1.